A 32-amino-acid chain; its full sequence is Natriuretic peptide Coa_NP2 (32 aa).

Cysteines 8 and 24 form a disulfide.

It belongs to the natriuretic peptide family. Snake NP subfamily. In terms of tissue distribution, expressed by the venom gland.

It is found in the secreted. Functionally, snake venom natriuretic peptide that exhibits hypotensive and vasorelaxant effects. Produces a dose-dependent hypotension in rats, followed by significant increases in concentrations of markers of nitric oxide (NO) formation measured in the plasma and vasorelaxation in a thoracic aortic ring bath. The peptide may exert its hypotensive action, at least in part, through stimulation of NO production. The vasorelaxant effect is endothelium-dependent and does not appear to be mediated by the natriuretic peptide receptor-A, as its action is not modified by isatin (a potent NPR1 antagonist). May act by activating the natriuretic peptide receptor-B (NPR2). This Crotalus lutosus abyssus (Grand Canyon rattlesnake) protein is Natriuretic peptide Coa_NP2.